Here is a 253-residue protein sequence, read N- to C-terminus: Probable transcriptional regulatory protein Synpcc7942_1017 (253 aa).

Belongs to the TACO1 family.

The protein resides in the cytoplasm. This Synechococcus elongatus (strain ATCC 33912 / PCC 7942 / FACHB-805) (Anacystis nidulans R2) protein is Probable transcriptional regulatory protein Synpcc7942_1017.